The following is a 793-amino-acid chain: Outer membrane protein assembly factor BamA (793 aa).

An N-terminal signal peptide occupies residues 1–19 (MKKLLIASLLFGTTTTVFA). 5 consecutive POTRA domains span residues 22-89 (FVAK…VVAK), 90-170 (SIIS…INED), 173-259 (AKLA…VNEG), 262-341 (YDLR…VDAG), and 344-418 (LTVR…VKER).

The protein belongs to the BamA family. Part of the Bam complex.

The protein localises to the cell outer membrane. In terms of biological role, part of the outer membrane protein assembly complex, which is involved in assembly and insertion of beta-barrel proteins into the outer membrane. The protein is Outer membrane protein assembly factor BamA of Haemophilus influenzae.